A 387-amino-acid polypeptide reads, in one-letter code: MNKFLNKKWSLILTMGGIFLMATLSLIFATGKKAFNDQTSAEDIPSLAEAFRDYFPIGAAIEPGYTTGQIAELYKKHVNMLVAENAMKPASLQPTEGNFQWADADRIVQFAKENGMELRFHTLVWHNQTPTGFSLDKEGKPMVEETDPQKREENRKLLLQRLENYIRAVVLRYKDDIKSWDVVNEVIEPNDPGGMRNSPWYQITGTEYIEVAFRATREAGGSDIKLYINDYNTDDPVKRDILYELVKNLLEKGVPIDGVGHQTHIDIYNPPVERIIESIKKFAGLGLDNIITELDMSIYSWNDRSDYGDSIPDYILTLQAKRYQELFDALKENKDIVSAVVFWGISDKYSWLNGFPVKRTNAPLLFDRNFMPKPAFWAIVDPSRLRE.

Residues 41-382 (AEDIPSLAEA…KPAFWAIVDP (342 aa)) enclose the GH10 domain. Residue E185 is the Proton donor of the active site. E293 serves as the catalytic Nucleophile.

This sequence belongs to the glycosyl hydrolase 10 (cellulase F) family.

It carries out the reaction Endohydrolysis of (1-&gt;4)-beta-D-glucosidic linkages in cellulose, lichenin and cereal beta-D-glucans.. It catalyses the reaction Endohydrolysis of (1-&gt;4)-beta-D-xylosidic linkages in xylans.. Its pathway is glycan degradation; xylan degradation. Its function is as follows. Active toward xylan, carboxymethylcellulose, P-nitrophenyl-beta-D-xylopyranoside and P-nitrophenyl-beta-D-cellobioside. The chain is Thermostable celloxylanase (xynB) from Thermoclostridium stercorarium (Clostridium stercorarium).